We begin with the raw amino-acid sequence, 1272 residues long: uncharacterized protein (1272 aa).

Coiled coils occupy residues 185–212, 246–274, and 607–640; these read IEFL…EAVN, KNSA…YLDA, and ALGK…NTVI. A disordered region spans residues 1179 to 1231; sequence ELPETSQQPVVPTPPATRPSSPIPPESDILTEEEQLEEQPPRQQQATRKTTTT. Positions 1189–1203 are enriched in pro residues; that stretch reads VPTPPATRPSSPIPP. Over residues 1219-1231 the composition is skewed to low complexity; the sequence is PRQQQATRKTTTT.

This is an uncharacterized protein from Magallana gigas (Pacific oyster).